Here is a 206-residue protein sequence, read N- to C-terminus: Protein SUE1, mitochondrial (206 aa).

A mitochondrion-targeting transit peptide spans 1–24 (MILLKRTKIRGVSVSFVSLQRRTH).

It localises to the mitochondrion envelope. Functionally, required for degradation of unstable forms of cytochrome c. The chain is Protein SUE1, mitochondrial from Saccharomyces cerevisiae (strain ATCC 204508 / S288c) (Baker's yeast).